The sequence spans 68 residues: Small ribosomal subunit protein bS21 (68 aa).

Positions 39–68 (PPSVKRVRKKQESERRHRKERAMRRRMMEE) are disordered. Residues 54-68 (RHRKERAMRRRMMEE) show a composition bias toward basic residues.

Belongs to the bacterial ribosomal protein bS21 family.

This chain is Small ribosomal subunit protein bS21, found in Orientia tsutsugamushi (strain Ikeda) (Rickettsia tsutsugamushi).